Consider the following 174-residue polypeptide: N5-carboxyaminoimidazole ribonucleotide mutase (174 aa).

Substrate contacts are provided by Ser-15, Asp-18, and Arg-45.

Belongs to the AIR carboxylase family. Class I subfamily.

It carries out the reaction 5-carboxyamino-1-(5-phospho-D-ribosyl)imidazole + H(+) = 5-amino-1-(5-phospho-D-ribosyl)imidazole-4-carboxylate. It functions in the pathway purine metabolism; IMP biosynthesis via de novo pathway; 5-amino-1-(5-phospho-D-ribosyl)imidazole-4-carboxylate from 5-amino-1-(5-phospho-D-ribosyl)imidazole (N5-CAIR route): step 2/2. In terms of biological role, catalyzes the conversion of N5-carboxyaminoimidazole ribonucleotide (N5-CAIR) to 4-carboxy-5-aminoimidazole ribonucleotide (CAIR). This chain is N5-carboxyaminoimidazole ribonucleotide mutase, found in Pyrococcus abyssi (strain GE5 / Orsay).